Consider the following 349-residue polypeptide: D-arabinitol dehydrogenase 1 (349 aa).

Positions 46, 67, 97, 100, 103, 111, and 151 each coordinate Zn(2+).

The protein belongs to the zinc-containing alcohol dehydrogenase family. Zn(2+) serves as cofactor.

Its subcellular location is the cell projection. The enzyme catalyses D-arabinitol + NADP(+) = D-xylulose + NADPH + H(+). It carries out the reaction D-arabinitol + NADP(+) = D-ribulose + NADPH + H(+). Its function is as follows. D-arabinitol dehydrogenase which mostly produces D-arabinitol in haustoria, the appendages of the parasitic fungus that penetrate the host's tissue and draws nutrients from it. D-arabinitol accumulation may serve as a carbohydrate storage compound. D-arabinitol is also capable of quenching reactive oxygen species involved in host plant defense reactions, thus providing protection for the rust fungus during the pathogenic interaction. The chain is D-arabinitol dehydrogenase 1 (ARD1) from Uromyces fabae (Rust fungus).